The primary structure comprises 275 residues: WIMGHMVNAIYQIDEFVDLGANAIETDVEFSSSGKAKYTYHGVPCDCFRWCKKWENIDGFLEALRRATTPGDSKYRKELILVVLDLKLDYVYLSDAYDAGKDLAQRLVKHYWNGGRNGGRAYILLSVPVVEYYRLITGFRAHLMNEGYKDLLAKVGYDFSEDTYLSTIHDGFRNAGVRDKDHIWQSDGISNCFARTLTRLKEAVSNRDSTDGYSNKVYYWTVDKETSITDAINAGADGIMTNHPDRVINVLKDDEIKKKFRLARYRDNPWKTFRK.

The active site involves H5. E25 and D27 together coordinate Mg(2+). Residue H41 is the Nucleophile of the active site. 2 disulfide bridges follow: C45/C51 and C47/C192. Residue D85 participates in Mg(2+) binding.

It belongs to the arthropod phospholipase D family. Class II subfamily. It depends on Mg(2+) as a cofactor. Expressed by the venom gland.

It localises to the secreted. The enzyme catalyses an N-(acyl)-sphingosylphosphocholine = an N-(acyl)-sphingosyl-1,3-cyclic phosphate + choline. It catalyses the reaction an N-(acyl)-sphingosylphosphoethanolamine = an N-(acyl)-sphingosyl-1,3-cyclic phosphate + ethanolamine. It carries out the reaction a 1-acyl-sn-glycero-3-phosphocholine = a 1-acyl-sn-glycero-2,3-cyclic phosphate + choline. The catalysed reaction is a 1-acyl-sn-glycero-3-phosphoethanolamine = a 1-acyl-sn-glycero-2,3-cyclic phosphate + ethanolamine. Dermonecrotic toxins cleave the phosphodiester linkage between the phosphate and headgroup of certain phospholipids (sphingolipid and lysolipid substrates), forming an alcohol (often choline) and a cyclic phosphate. This toxin acts on sphingomyelin (SM). It may also act on ceramide phosphoethanolamine (CPE), lysophosphatidylcholine (LPC) and lysophosphatidylethanolamine (LPE), but not on lysophosphatidylserine (LPS), and lysophosphatidylglycerol (LPG). It acts by transphosphatidylation, releasing exclusively cyclic phosphate products as second products. Induces dermonecrosis, hemolysis, increased vascular permeability, edema, inflammatory response, and platelet aggregation. This is Dermonecrotic toxin LhSicTox-alphaVI1ii from Loxosceles hirsuta (Recluse spider).